A 461-amino-acid polypeptide reads, in one-letter code: Ribitol-5-phosphate transferase FKTN (461 aa).

Over 1–7 (MSRINKN) the chain is Cytoplasmic. Residues 6–27 (KNVVLALLTLTSSAFLLFQLYY) are required and sufficient for interaction with POMGNT1. A helical; Signal-anchor for type II membrane protein transmembrane segment spans residues 8–28 (VVLALLTLTSSAFLLFQLYYY). Residues 29 to 461 (KHYLSTKNGA…SEWDEVIQLY (433 aa)) lie on the Lumenal side of the membrane. N92 carries an N-linked (GlcNAc...) asparagine glycan.

The protein belongs to the LicD transferase family. In terms of assembly, forms a complex composed of FKTN/fukutin, FKRP and RXYLT1/TMEM5. Interacts (via transmembrane domain) with POMGNT1; the interaction is direct and is required for normal POMGNT1 location in Golgi membranes. Expressed in the retina (at protein level). Widely expressed with highest expression in brain, heart, pancreas and skeletal muscle. Expressed at similar levels in control fetal and adult brain. Expressed in migrating neurons, including Cajar-Retzius cells and adult cortical neurons, as well as hippocampal pyramidal cells and cerebellar Purkinje cells. No expression observed in the glia limitans, the subpial astrocytes (which contribute to basement membrane formation) or other glial cells.

It localises to the golgi apparatus membrane. The protein resides in the cytoplasm. It is found in the nucleus. It catalyses the reaction 3-O-[beta-D-GalNAc-(1-&gt;3)-beta-D-GlcNAc-(1-&gt;4)-(O-6-P-alpha-D-Man)]-Thr-[protein] + CDP-L-ribitol = 3-O-[Rib-ol-P-3-beta-D-GalNAc-(1-&gt;3)-beta-D-GlcNAc-(1-&gt;4)-(O-6-P-alpha-D-Man)]-Thr-[protein] + CMP + H(+). The protein operates within protein modification; protein glycosylation. In terms of biological role, catalyzes the transfer of a ribitol-phosphate from CDP-ribitol to the distal N-acetylgalactosamine of the phosphorylated O-mannosyl trisaccharide (N-acetylgalactosamine-beta-3-N-acetylglucosamine-beta-4-(phosphate-6-)mannose), a carbohydrate structure present in alpha-dystroglycan (DAG1). This constitutes the first step in the formation of the ribitol 5-phosphate tandem repeat which links the phosphorylated O-mannosyl trisaccharide to the ligand binding moiety composed of repeats of 3-xylosyl-alpha-1,3-glucuronic acid-beta-1. Required for normal location of POMGNT1 in Golgi membranes, and for normal POMGNT1 activity. May interact with and reinforce a large complex encompassing the outside and inside of muscle membranes. Could be involved in brain development. In Homo sapiens (Human), this protein is Ribitol-5-phosphate transferase FKTN.